The following is a 268-amino-acid chain: Photosystem II 22 kDa protein 1, chloroplastic (268 aa).

Residues 1–60 constitute a chloroplast transit peptide; that stretch reads MAQSMLVSGANGTVAAASTSRLQPVRPTPFSRLVLSQPSSSLGRAVSVKTVALFGRSKTK. A run of 2 repeats spans residues 54 to 161 and 164 to 268. 4 consecutive transmembrane segments (helical) span residues 99 to 119, 133 to 153, 199 to 219, and 234 to 254; these read VAML…KGIL, AEPL…GALG, LFVG…EIIT, and PINE…IAAI.

The protein belongs to the ELIP/psbS family. In terms of tissue distribution, expressed at low levels in leaves (at protein level).

The protein resides in the plastid. It is found in the chloroplast thylakoid membrane. In terms of biological role, involved in high light-mediated energy-dependent nonphotochemical quenching (NPQ, qE) and thermal dissipation (TD) thus regulating energy conversion in photosystem II and protecting from photoinhibition. Also seems to regulate quantum yield of electron transport in fluctuating light conditions. The protein is Photosystem II 22 kDa protein 1, chloroplastic of Oryza sativa subsp. indica (Rice).